A 138-amino-acid polypeptide reads, in one-letter code: Thyrotropin subunit beta (138 aa).

Residues 1-20 form the signal peptide; sequence MTATFLMSMIFGLACGQAMS. 6 disulfides stabilise this stretch: cysteine 22–cysteine 72, cysteine 36–cysteine 87, cysteine 39–cysteine 125, cysteine 47–cysteine 103, cysteine 51–cysteine 105, and cysteine 108–cysteine 115. Asparagine 43 carries an N-linked (GlcNAc...) asparagine glycan. A propeptide spanning residues 133–138 is cleaved from the precursor; the sequence is MVGFSI.

It belongs to the glycoprotein hormones subunit beta family. Heterodimer of a common alpha chain and a unique beta chain which confers biological specificity to thyrotropin, lutropin, follitropin and gonadotropin.

The protein localises to the secreted. Indispensable for the control of thyroid structure and metabolism. The polypeptide is Thyrotropin subunit beta (TSHB) (Bos taurus (Bovine)).